A 593-amino-acid polypeptide reads, in one-letter code: DEAD-box ATP-dependent RNA helicase 18 (593 aa).

The short motif at 16–44 (FSDLEPPLSGDIIEALNQSDFEFCTPVQA) is the Q motif element. Residues 47-226 (IPLLCSYKDV…KAGLRNPVRV (180 aa)) form the Helicase ATP-binding domain. 60–67 (AATGSGKT) is a binding site for ATP. Residues 174–177 (DEAD) carry the DEAD box motif. A Helicase C-terminal domain is found at 264–411 (QLVDLLIKNS…ERKCSEDASD (148 aa)). Residues 506–524 (QRQQNLQVRKEKRQEEKKE) show a composition bias toward basic and acidic residues. Residues 506-561 (QRQQNLQVRKEKRQEEKKEKGKRKRVDASASNDPKKASRKLTGKQRQTIQTAEDEE) are disordered.

The protein belongs to the DEAD box helicase family. DDX55/SPB4 subfamily.

The catalysed reaction is ATP + H2O = ADP + phosphate + H(+). The chain is DEAD-box ATP-dependent RNA helicase 18 (RH18) from Arabidopsis thaliana (Mouse-ear cress).